Reading from the N-terminus, the 402-residue chain is Potassium channel subfamily K member 9 (402 aa).

Topologically, residues 1–8 (MKRQNVRT) are cytoplasmic. Residues 9–29 (LSLIACTFTYLLVGAAVFDAL) traverse the membrane as a helical segment. At 30–88 (ESDHEMREEEKLKAEEVRLRGKYNISSDDYQQLELVILQSEPHRAGVQWKFAGSFYFAI) the chain is on the extracellular side. Asparagine 53 carries an N-linked (GlcNAc...) asparagine glycan. Positions 89 to 101 (TVITTIGYGHAAP) form an intramembrane region, pore-forming. Positions 93, 94, 95, and 96 each coordinate K(+). The interval 93–98 (TIGYGH) is selectivity filter 1. At 102–107 (GTDAGK) the chain is on the extracellular side. A helical membrane pass occupies residues 108 to 128 (AFCMFYAVLGIPLTLVMFQSL). Over 129-158 (GERMNTFVRYLLKRIKKCCGMRNTEVSMEN) the chain is Cytoplasmic. The helical transmembrane segment at 159 to 179 (MVTVGFFSCMGTLCLGAAAFS) threads the bilayer. The Extracellular segment spans residues 180-194 (QCEDWSFFHAYYYCF). The pore-forming intramembrane region spans 195 to 207 (ITLTTIGFGDFVA). 4 residues coordinate K(+): threonine 199, isoleucine 200, glycine 201, and phenylalanine 202. The interval 199-204 (TIGFGD) is selectivity filter 2. Residues 208–218 (LQAKGALQRKP) lie on the Extracellular side of the membrane. The helical transmembrane segment at 219–239 (FYVAFSFMYILVGLTVIGAFL) threads the bilayer. Residues 240-402 (NLVVLRFLTM…HRLHLRRKSI (163 aa)) are Cytoplasmic-facing. The interval 243–248 (VLRFLT) is X-gate.

It belongs to the two pore domain potassium channel (TC 1.A.1.8) family. Homodimer. Heterodimer with KCNK1. Heterodimer with KCNK3. As to expression, expressed in adrenal glands mainly in outer zona glomerulosa and inner zona medullaris. Expressed in retinal ganglion cells. Expressed in dentate gyrus (at protein level).

The protein resides in the cell membrane. The protein localises to the mitochondrion inner membrane. It is found in the cell projection. Its subcellular location is the dendrite. The catalysed reaction is K(+)(in) = K(+)(out). It carries out the reaction Na(+)(in) = Na(+)(out). With respect to regulation, inhibited by NTS:NTSR1 signaling in dentate gyrus granule cells. Functionally, k(+) channel that conducts voltage-dependent outward rectifying currents upon membrane depolarization. Voltage sensing is coupled to K(+) electrochemical gradient in an 'ion flux gating' mode where outward but not inward ion flow opens the gate. Changes ion selectivity and becomes permeable to Na(+) ions in response to extracellular acidification. Protonation of the pH sensor His-98 stabilizes C-type inactivation conformation likely converting the channel from outward K(+)-conducting, to inward Na(+)-conducting to nonconductive state. Homo- and heterodimerizes to form functional channels with distinct regulatory and gating properties. Allows K(+) currents with fast-gating kinetics important for the repolarization and hyperpolarization phases of action potentials. In granule neurons, hyperpolarizes the resting membrane potential to limit intrinsic neuronal excitability, but once the action potential threshold is reached, supports high-frequency action potential firing and increased neuronal excitability. Homomeric and/or heteromeric KCNK3:KCNK9 channels operate in cerebellar granule cells, whereas heteromeric KCNK1:KCNK9 enables currents in hippocampal dentate gyrus granule neurons. Dispensable for central chemosensory respiration i.e. breathing controlled by brainstem CO2/pH, it rather conducts pH-sensitive currents and controls the firing rate of serotonergic raphe neurons involved in potentiation of the respiratory chemoreflex. In retinal ganglion cells, mediates outward rectifying currents that regulate action potentials in response to acidification of the synaptic cleft. Involved in transmission of image-forming and nonimage-forming visual information in the retina. In adrenal gland, contributes to the maintenance of a hyperpolarized resting membrane potential of aldosterone-producing cells at zona glomerulosa and limits aldosterone release as part of a regulatory mechanism that controls arterial blood pressure and electrolyte homeostasis. This chain is Potassium channel subfamily K member 9, found in Mus musculus (Mouse).